The primary structure comprises 278 residues: Ferredoxin--NADP reductase A (278 aa).

In terms of domain architecture, FAD-binding FR-type spans 3–103 (PGYTEETVLE…KRATGTLTIG (101 aa)). Residues 52–55 (RAYS) and threonine 118 each bind FAD.

Belongs to the ferredoxin--NADP reductase type 1 family. FAD serves as cofactor.

The enzyme catalyses 2 reduced [4Fe-4S]-[ferredoxin] + NADP(+) + H(+) = 2 oxidized [4Fe-4S]-[ferredoxin] + NADPH. Transports electrons between NADPH and ferredoxin. Can transfer electrons to ferredoxins Fdx2 and Fdx8. Prefers NADPH to NADH. This is Ferredoxin--NADP reductase A from Sorangium cellulosum (strain So ce56) (Polyangium cellulosum (strain So ce56)).